The following is a 413-amino-acid chain: Methylaspartate ammonia-lyase (413 aa).

Residue Gln172 coordinates (2S,3S)-3-methyl-L-aspartate. Residues Asp238, Glu273, and Asp307 each contribute to the Mg(2+) site. Gln329 contributes to the (2S,3S)-3-methyl-L-aspartate binding site. Lys331 (proton acceptor) is an active-site residue. (2S,3S)-3-methyl-L-aspartate is bound by residues Thr360–Cys361 and Cys361.

Belongs to the methylaspartate ammonia-lyase family. Homodimer. Mg(2+) serves as cofactor.

The enzyme catalyses (2S,3S)-3-methyl-L-aspartate = mesaconate + NH4(+). It functions in the pathway amino-acid degradation; L-glutamate degradation via mesaconate pathway; acetate and pyruvate from L-glutamate: step 2/4. Its activity is regulated as follows. Inhibited by calcium ions. Its function is as follows. Involved in the methylaspartate cycle. Catalyzes the formation of the alpha,beta-unsaturated bond by the reversible anti elimination of ammonia from L-threo-beta-methylaspartate (L-threo-(2S,3S)-3-methylaspartate) to give mesaconate. It can also use L-erythro-beta-methylaspartate (L-erythro-(2S,3R)-3-methylaspartate), L-aspartate, fumarate and ethylfumarate as substrates. The chain is Methylaspartate ammonia-lyase from Clostridium tetanomorphum.